A 508-amino-acid chain; its full sequence is Glycerol kinase (508 aa).

Residue threonine 14 participates in ADP binding. Residues threonine 14, threonine 15, and serine 16 each contribute to the ATP site. Threonine 14 serves as a coordination point for sn-glycerol 3-phosphate. Residue arginine 18 coordinates ADP. 3 residues coordinate sn-glycerol 3-phosphate: arginine 84, glutamate 85, and tyrosine 136. Glycerol-binding residues include arginine 84, glutamate 85, and tyrosine 136. Position 232 is a phosphohistidine; by HPr (histidine 232). Aspartate 246 is a binding site for sn-glycerol 3-phosphate. Glycerol is bound by residues aspartate 246 and glutamine 247. ADP-binding residues include threonine 268 and glycine 311. The ATP site is built by threonine 268, glycine 311, glutamine 315, and glycine 412. ADP is bound by residues glycine 412 and asparagine 416.

The protein belongs to the FGGY kinase family. In terms of assembly, homotetramer and homodimer (in equilibrium). In terms of processing, the phosphoenolpyruvate-dependent sugar phosphotransferase system (PTS), including enzyme I, and histidine-containing protein (HPr) are required for the phosphorylation, which leads to the activation of the enzyme.

The catalysed reaction is glycerol + ATP = sn-glycerol 3-phosphate + ADP + H(+). It functions in the pathway polyol metabolism; glycerol degradation via glycerol kinase pathway; sn-glycerol 3-phosphate from glycerol: step 1/1. Activated by phosphorylation and inhibited by fructose 1,6-bisphosphate (FBP). Its function is as follows. Key enzyme in the regulation of glycerol uptake and metabolism. Catalyzes the phosphorylation of glycerol to yield sn-glycerol 3-phosphate. This Streptococcus pyogenes serotype M3 (strain ATCC BAA-595 / MGAS315) protein is Glycerol kinase.